Consider the following 356-residue polypeptide: Nitrilase, arylacetone-specific (356 aa).

Positions 7 to 280 constitute a CN hydrolase domain; the sequence is VRAAAVQAAS…EGLIIADLNM (274 aa). Glu-47 (proton acceptor) is an active-site residue. The active-site Proton donor is the Lys-129. Catalysis depends on Cys-163, which acts as the Nucleophile. The disordered stretch occupies residues 324–356; sequence QEEAPEPHVQSTAAPVAVSQTQDSDTLLVQEPS. Polar residues predominate over residues 332-356; that stretch reads VQSTAAPVAVSQTQDSDTLLVQEPS.

The protein belongs to the carbon-nitrogen hydrolase superfamily. Nitrilase family. In terms of assembly, homohexamer.

The enzyme catalyses a nitrile + 2 H2O = a carboxylate + NH4(+). Functionally, nitrilase that acts mostly on arylacetonitriles. The protein is Nitrilase, arylacetone-specific of Alcaligenes faecalis.